Consider the following 170-residue polypeptide: Superoxide dismutase [Fe] (170 aa).

Fe cation-binding residues include histidine 27, histidine 81, aspartate 163, and histidine 167.

The protein belongs to the iron/manganese superoxide dismutase family. In terms of assembly, homodimer. Fe cation serves as cofactor.

It carries out the reaction 2 superoxide + 2 H(+) = H2O2 + O2. In terms of biological role, destroys superoxide anion radicals which are normally produced within the cells and which are toxic to biological systems. The sequence is that of Superoxide dismutase [Fe] (sodA) from Raoultella planticola (Klebsiella planticola).